Reading from the N-terminus, the 304-residue chain is Large ribosomal subunit protein uL2 (304 aa).

Positions 246-282 (HTRGTAMNPVDHPHGGGEGRTRGKHPESPWGWKTKGY) are disordered. Positions 256–272 (DHPHGGGEGRTRGKHPE) are enriched in basic and acidic residues.

The protein belongs to the universal ribosomal protein uL2 family. In terms of assembly, part of the 50S ribosomal subunit. Forms a bridge to the 30S subunit in the 70S ribosome.

Its function is as follows. One of the primary rRNA binding proteins. Required for association of the 30S and 50S subunits to form the 70S ribosome, for tRNA binding and peptide bond formation. It has been suggested to have peptidyltransferase activity; this is somewhat controversial. Makes several contacts with the 16S rRNA in the 70S ribosome. This chain is Large ribosomal subunit protein uL2, found in Aquifex aeolicus (strain VF5).